We begin with the raw amino-acid sequence, 383 residues long: Neuropeptide Y receptor type 1 (383 aa).

Residues 1–44 are Extracellular-facing; the sequence is MNSTSFSQVENHSIYYNFSEKNSRFLAFENDDCHLPLAMIFTLA. Residues N2, N11, and N17 are each glycosylated (N-linked (GlcNAc...) asparagine). The chain crosses the membrane as a helical span at residues 45 to 65; that stretch reads LAYGAVIILGVSGNLALIIII. The Cytoplasmic portion of the chain corresponds to 66-76; that stretch reads LKQKEMRNVTN. Residues 77–97 form a helical membrane-spanning segment; it reads ILIVNLSFSDLLVAIMCLPFT. Over 98–116 the chain is Extracellular; it reads FVYTLMDHWVFGEAMCKLN. A disulfide bond links C113 and C198. Residues 117–137 form a helical membrane-spanning segment; it reads PFVQCVSITVSIFSLVLIAVE. The Cytoplasmic segment spans residues 138-154; the sequence is RHQLIINPRGWRPNNRH. A helical transmembrane segment spans residues 155-175; sequence AYVGIAVIWVLAVASSLPFLI. The Extracellular portion of the chain corresponds to 176 to 211; it reads YQVLTDEPFQNVTLDAFKDKYVCFDKFPSDSHRLSY. N-linked (GlcNAc...) asparagine glycosylation occurs at N186. The chain crosses the membrane as a helical span at residues 212 to 232; the sequence is TTLLLVLQYFGPLCFIFICYF. Residues 233-260 are Cytoplasmic-facing; it reads KIYVRLKRRNSMMDKMRDNKYRSSEAKR. The helical transmembrane segment at 261 to 281 threads the bilayer; it reads INIMLLSIVVAFAVCWLPLTI. Residues 282 to 299 lie on the Extracellular side of the membrane; that stretch reads FNTVFDWDHQIIATCNHN. The helical transmembrane segment at 300–320 threads the bilayer; that stretch reads LLFLLCHLTAMISTCVNPIFY. The Cytoplasmic segment spans residues 321–383; that stretch reads GFLNKNFQRD…KIHTDDNEKI (63 aa). C338 carries the S-palmitoyl cysteine lipid modification. Residue S368 is modified to Phosphoserine.

Belongs to the G-protein coupled receptor 1 family.

Its subcellular location is the cell membrane. Receptor for neuropeptide Y and peptide YY. This Bos taurus (Bovine) protein is Neuropeptide Y receptor type 1 (NPY1R).